The chain runs to 636 residues: Beta-galactosidase-1-like protein 2 (636 aa).

An N-terminal signal peptide occupies residues 1-32 (MTTWSLRRRPARTLGLLLLVVLGFLVLRRLDW). The active-site Proton donor is the E201. E277 functions as the Nucleophile in the catalytic mechanism.

Belongs to the glycosyl hydrolase 35 family.

It localises to the secreted. In Homo sapiens (Human), this protein is Beta-galactosidase-1-like protein 2 (GLB1L2).